A 332-amino-acid polypeptide reads, in one-letter code: Phosphate acyltransferase (332 aa).

It belongs to the PlsX family. Homodimer. Probably interacts with PlsY.

Its subcellular location is the cytoplasm. It catalyses the reaction a fatty acyl-[ACP] + phosphate = an acyl phosphate + holo-[ACP]. The protein operates within lipid metabolism; phospholipid metabolism. In terms of biological role, catalyzes the reversible formation of acyl-phosphate (acyl-PO(4)) from acyl-[acyl-carrier-protein] (acyl-ACP). This enzyme utilizes acyl-ACP as fatty acyl donor, but not acyl-CoA. In Fusobacterium nucleatum subsp. nucleatum (strain ATCC 25586 / DSM 15643 / BCRC 10681 / CIP 101130 / JCM 8532 / KCTC 2640 / LMG 13131 / VPI 4355), this protein is Phosphate acyltransferase.